An 81-amino-acid polypeptide reads, in one-letter code: Photosystem I iron-sulfur center (81 aa).

4Fe-4S ferredoxin-type domains follow at residues 2–31 and 37–68; these read SHAVKIYDTCIGCTQCVRACPLDVLEMVPW and GQIASSPRTEDCVGCKRCETACPTDFLSIRVY. Cys-11, Cys-14, Cys-17, Cys-21, Cys-48, Cys-51, Cys-54, and Cys-58 together coordinate [4Fe-4S] cluster.

In terms of assembly, the cyanobacterial PSI reaction center is composed of one copy each of PsaA,B,C,D,E,F,I,J,K,L,M and X, and forms trimeric complexes. Requires [4Fe-4S] cluster as cofactor.

Its subcellular location is the cellular thylakoid membrane. The enzyme catalyses reduced [plastocyanin] + hnu + oxidized [2Fe-2S]-[ferredoxin] = oxidized [plastocyanin] + reduced [2Fe-2S]-[ferredoxin]. Functionally, apoprotein for the two 4Fe-4S centers FA and FB of photosystem I (PSI); essential for photochemical activity. FB is the terminal electron acceptor of PSI, donating electrons to ferredoxin. The C-terminus interacts with PsaA/B/D and helps assemble the protein into the PSI complex. Required for binding of PsaD and PsaE to PSI. PSI is a plastocyanin/cytochrome c6-ferredoxin oxidoreductase, converting photonic excitation into a charge separation, which transfers an electron from the donor P700 chlorophyll pair to the spectroscopically characterized acceptors A0, A1, FX, FA and FB in turn. The sequence is that of Photosystem I iron-sulfur center from Synechococcus sp. (strain WH7803).